A 607-amino-acid chain; its full sequence is UvrABC system protein C (607 aa).

The GIY-YIG domain occupies 16-94; the sequence is HLPGVYRHLD…IKSLRPRYNI (79 aa). One can recognise a UVR domain in the interval 203–238; it reads REVMDEIEARMQQASGELRFEEAAVLRDQMGSLSKV.

It belongs to the UvrC family. As to quaternary structure, interacts with UvrB in an incision complex.

The protein localises to the cytoplasm. Its function is as follows. The UvrABC repair system catalyzes the recognition and processing of DNA lesions. UvrC both incises the 5' and 3' sides of the lesion. The N-terminal half is responsible for the 3' incision and the C-terminal half is responsible for the 5' incision. The polypeptide is UvrABC system protein C (Bordetella avium (strain 197N)).